A 262-amino-acid polypeptide reads, in one-letter code: Acyl-[acyl-carrier-protein]--UDP-N-acetylglucosamine O-acyltransferase (262 aa).

Belongs to the transferase hexapeptide repeat family. LpxA subfamily. Homotrimer.

It is found in the cytoplasm. It catalyses the reaction a (3R)-hydroxyacyl-[ACP] + UDP-N-acetyl-alpha-D-glucosamine = a UDP-3-O-[(3R)-3-hydroxyacyl]-N-acetyl-alpha-D-glucosamine + holo-[ACP]. The protein operates within glycolipid biosynthesis; lipid IV(A) biosynthesis; lipid IV(A) from (3R)-3-hydroxytetradecanoyl-[acyl-carrier-protein] and UDP-N-acetyl-alpha-D-glucosamine: step 1/6. Involved in the biosynthesis of lipid A, a phosphorylated glycolipid that anchors the lipopolysaccharide to the outer membrane of the cell. This chain is Acyl-[acyl-carrier-protein]--UDP-N-acetylglucosamine O-acyltransferase, found in Pectobacterium atrosepticum (strain SCRI 1043 / ATCC BAA-672) (Erwinia carotovora subsp. atroseptica).